Consider the following 561-residue polypeptide: MKETIIELLEAAGTQLKQQGILPADAPLTVKVEPTKDKAHGDYASNLALTLAKPAGRKPRDLAEALVAALPPSDAIRQVDIAGPGFINFFAATDAAAQVVPAILDAGDTFGRSLSGAGEKVQVEFVSANPTGPLHVGHGRGAAIGDCLCRLLEATGFEVTREFYYNDAGAQIQNLALSVQARVQGLTPDDAAWPEDGYRGAYINDVAQAYLAGETVVADDRDVTASAAPDDLDAIRDFAVAYLRREQDLDLKAFGVAFDVYFLESSLYDDGKVDATVKALVEGGHTYEEDGATWLRTTDFGDDKDRVMRKKDGGYTYFLPDVAYHLDKWQRGFTTVINEQGADHHSTVTRVRAGLQALEAGIPQGWPDYVLHQMVLVTRSGVEVKLSKRAGSYVTLRDLIDEVGRDATRFFLAARRSDSQLTFDIDLARSQSNDNPVYYIQYAHARVCSVMRRAQDAGKAFDRDLAMQHLGRLDAPQEKELMNRLARYPEVVERAARMREPQQVAQYLMDLAADFHTCYNAVKVMVEDDELRNARLALGLATRQVIRNGLDLMGVSAPEEM.

Residues 128–138 (ANPTGPLHVGH) carry the 'HIGH' region motif.

It belongs to the class-I aminoacyl-tRNA synthetase family. In terms of assembly, monomer.

Its subcellular location is the cytoplasm. The catalysed reaction is tRNA(Arg) + L-arginine + ATP = L-arginyl-tRNA(Arg) + AMP + diphosphate. The chain is Arginine--tRNA ligase from Chromohalobacter salexigens (strain ATCC BAA-138 / DSM 3043 / CIP 106854 / NCIMB 13768 / 1H11).